The following is an 84-amino-acid chain: Cell division topological specificity factor (84 aa).

This sequence belongs to the MinE family.

Functionally, prevents the cell division inhibition by proteins MinC and MinD at internal division sites while permitting inhibition at polar sites. This ensures cell division at the proper site by restricting the formation of a division septum at the midpoint of the long axis of the cell. The chain is Cell division topological specificity factor from Ectopseudomonas mendocina (strain ymp) (Pseudomonas mendocina).